The primary structure comprises 102 residues: Acid shock protein (102 aa).

Positions 1–21 (MKKVLALVVAAAMGLSSAAFA) are cleaved as a signal peptide. Positions 22–41 (AETATTPAPTATTTKAAPAK) are enriched in low complexity. Positions 22–58 (AETATTPAPTATTTKAAPAKTTHHKKQHKAAPAQKAQ) are excised as a propeptide. Positions 22–102 (AETATTPAPT…PAKPAAQPAA (81 aa)) are disordered. Basic residues predominate over residues 80-90 (AAKKHAKKHSH). The span at 91–102 (QQPAKPAAQPAA) shows a compositional bias: low complexity.

This sequence belongs to the Asr family. Proteolytic processing gives rise to the active protein.

Its subcellular location is the periplasm. Functionally, required for growth and/or survival at acidic conditions. The chain is Acid shock protein from Escherichia coli O45:K1 (strain S88 / ExPEC).